The sequence spans 88 residues: Adenylosuccinate lyase (88 aa).

N(6)-(1,2-dicarboxyethyl)-AMP-binding positions include 4–5 and 67–69; these read RY and KHD.

It belongs to the lyase 1 family. Adenylosuccinate lyase subfamily. Homotetramer and homodimer. Residues from neighboring subunits contribute catalytic and substrate-binding residues to each active site.

The enzyme catalyses N(6)-(1,2-dicarboxyethyl)-AMP = fumarate + AMP. It catalyses the reaction (2S)-2-[5-amino-1-(5-phospho-beta-D-ribosyl)imidazole-4-carboxamido]succinate = 5-amino-1-(5-phospho-beta-D-ribosyl)imidazole-4-carboxamide + fumarate. It participates in purine metabolism; AMP biosynthesis via de novo pathway; AMP from IMP: step 2/2. Its pathway is purine metabolism; IMP biosynthesis via de novo pathway; 5-amino-1-(5-phospho-D-ribosyl)imidazole-4-carboxamide from 5-amino-1-(5-phospho-D-ribosyl)imidazole-4-carboxylate: step 2/2. Functionally, catalyzes two reactions in de novo purine nucleotide biosynthesis. Catalyzes the breakdown of 5-aminoimidazole- (N-succinylocarboxamide) ribotide (SAICAR or 2-[5-amino-1-(5-phospho-beta-D-ribosyl)imidazole-4-carboxamido]succinate) to 5-aminoimidazole-4-carboxamide ribotide (AICAR or 5-amino-1-(5-phospho-beta-D-ribosyl)imidazole-4-carboxamide) and fumarate, and of adenylosuccinate (ADS or N(6)-(1,2-dicarboxyethyl)-AMP) to adenosine monophosphate (AMP) and fumarate. The chain is Adenylosuccinate lyase (purB) from Spiroplasma citri.